A 964-amino-acid polypeptide reads, in one-letter code: Glycine dehydrogenase (decarboxylating) (964 aa).

Lysine 710 bears the N6-(pyridoxal phosphate)lysine mark.

It belongs to the GcvP family. In terms of assembly, the glycine cleavage system is composed of four proteins: P, T, L and H. Pyridoxal 5'-phosphate serves as cofactor.

It catalyses the reaction N(6)-[(R)-lipoyl]-L-lysyl-[glycine-cleavage complex H protein] + glycine + H(+) = N(6)-[(R)-S(8)-aminomethyldihydrolipoyl]-L-lysyl-[glycine-cleavage complex H protein] + CO2. Functionally, the glycine cleavage system catalyzes the degradation of glycine. The P protein binds the alpha-amino group of glycine through its pyridoxal phosphate cofactor; CO(2) is released and the remaining methylamine moiety is then transferred to the lipoamide cofactor of the H protein. In Saccharophagus degradans (strain 2-40 / ATCC 43961 / DSM 17024), this protein is Glycine dehydrogenase (decarboxylating).